We begin with the raw amino-acid sequence, 57 residues long: Sec-independent protein translocase protein TatAy (57 aa).

Residues 1 to 21 traverse the membrane as a helical segment; it reads MPIGPGSLAVIAIVALIIFGP.

Belongs to the TatA/E family. In terms of assembly, forms a complex with TatCy. Two types of complexes exist: one composed of TatAy and TatCy, and another composed only of TatAy. Cytosolic TatA forms large complexes or aggregates.

The protein localises to the cell membrane. Its subcellular location is the cytoplasm. The protein resides in the cytosol. Part of the twin-arginine translocation (Tat) system that transports large folded proteins containing a characteristic twin-arginine motif in their signal peptide across membranes. TatA could form the protein-conducting channel of the Tat system. Required for YwbN secretion. This is Sec-independent protein translocase protein TatAy from Bacillus subtilis (strain 168).